A 368-amino-acid polypeptide reads, in one-letter code: Homoserine O-acetyltransferase (368 aa).

The AB hydrolase-1 domain maps to 44-350 (NAILVAHAWT…AYGHDAFLLE (307 aa)). Residue serine 150 is the Nucleophile of the active site. A substrate-binding site is contributed by arginine 217. Residues aspartate 311 and histidine 344 contribute to the active site. Aspartate 345 provides a ligand contact to substrate.

It belongs to the AB hydrolase superfamily. MetX family. Homodimer.

The protein resides in the cytoplasm. The enzyme catalyses L-homoserine + acetyl-CoA = O-acetyl-L-homoserine + CoA. It functions in the pathway amino-acid biosynthesis; L-methionine biosynthesis via de novo pathway; O-acetyl-L-homoserine from L-homoserine: step 1/1. In terms of biological role, transfers an acetyl group from acetyl-CoA to L-homoserine, forming acetyl-L-homoserine. This is Homoserine O-acetyltransferase from Geobacter sulfurreducens (strain ATCC 51573 / DSM 12127 / PCA).